The following is a 362-amino-acid chain: Chorismate synthase (362 aa).

NADP(+) is bound at residue arginine 46. Residues 122 to 124 (RSS), 238 to 239 (NA), glycine 278, 293 to 297 (KPTPS), and arginine 319 each bind FMN.

Belongs to the chorismate synthase family. Homotetramer. FMNH2 is required as a cofactor.

It carries out the reaction 5-O-(1-carboxyvinyl)-3-phosphoshikimate = chorismate + phosphate. Its pathway is metabolic intermediate biosynthesis; chorismate biosynthesis; chorismate from D-erythrose 4-phosphate and phosphoenolpyruvate: step 7/7. In terms of biological role, catalyzes the anti-1,4-elimination of the C-3 phosphate and the C-6 proR hydrogen from 5-enolpyruvylshikimate-3-phosphate (EPSP) to yield chorismate, which is the branch point compound that serves as the starting substrate for the three terminal pathways of aromatic amino acid biosynthesis. This reaction introduces a second double bond into the aromatic ring system. The chain is Chorismate synthase from Campylobacter jejuni subsp. jejuni serotype O:6 (strain 81116 / NCTC 11828).